The following is a 372-amino-acid chain: Ubl carboxyl-terminal hydrolase 18 (372 aa).

The segment at 19-45 (SSQSPADLEEKKEEDSNMKREQPRERP) is disordered. A compositionally biased stretch (basic and acidic residues) spans 26–45 (LEEKKEEDSNMKREQPRERP). The mediates interaction with IFNAR2 stretch occupies residues 36-51 (MKREQPRERPRAWDYP). The segment at 51-112 (PHGLVGLHNI…MLLLLEKMQD (62 aa)) is mediates interaction with STAT2. In terms of domain architecture, USP spans 55–370 (VGLHNIGQTC…TAYLLVYMKM (316 aa)). The active-site Nucleophile is cysteine 64. The segment at 303 to 312 (ELFAVIAHVG) is mediates interaction with STAT2 and necessary for the negative regulation of the type I IFN signaling pathway. The mediates interaction with IFNAR2 stretch occupies residues 313–372 (MADSGHYCVYIRNAVDGKWFCFNDSNICLVSWEDIQCTYGNPNYHWQETAYLLVYMKMEC). Histidine 318 (proton acceptor) is an active-site residue.

Belongs to the peptidase C19 family. Interacts with STAT2; the interaction is direct. Interacts with IFNAR2; indirectly via STAT2, it negatively regulates the assembly of the ternary interferon-IFNAR1-IFNAR2 complex and inhibits type I interferon signaling. Interacts with STING1. Interacts with USP20.

Its subcellular location is the cytoplasm. The protein resides in the nucleus. The catalysed reaction is Thiol-dependent hydrolysis of ester, thioester, amide, peptide and isopeptide bonds formed by the C-terminal Gly of ubiquitin (a 76-residue protein attached to proteins as an intracellular targeting signal).. Functionally, interferon-induced ISG15-specific protease that plays a crucial role for maintaining a proper balance of ISG15-conjugated proteins in cells. Regulates protein ISGylation by efficiently cleaving ISG15 conjugates linked via isopeptide bonds. Regulates T-cell activation and T-helper 17 (Th17) cell differentiation by deubiquitinating TAK1, likely to keep TAK1-TAB complexes in steady conditions. In turn, restricts activation of NF-kappa-B, NFAT, and JNK as well as expression of IL2 in T-cells after TCR activation. Acts as a molecular adapter with USP20 to promote innate antiviral response through deubiquitinating STING1. Involved also in the negative regulation of the inflammatory response triggered by type I interferon. Upon recruitment by STAT2 to the type I interferon receptor subunit IFNAR2 interferes with the assembly of the ternary interferon-IFNAR1-IFNAR2 complex and acts as a negative regulator of the type I interferon signaling pathway. Its function is as follows. Has enzymatic activity similar to isoform 1 and interferes with type I interferon signaling. Major deISGylation enzyme for nuclear proteins. The sequence is that of Ubl carboxyl-terminal hydrolase 18 (USP18) from Homo sapiens (Human).